Consider the following 398-residue polypeptide: Probable purine permease 17 (398 aa).

Positions 1 to 26 (MEMSKASKQTTRHEESEHVQNPEPDQ) are disordered. A compositionally biased stretch (basic and acidic residues) spans 11 to 20 (TRHEESEHVQ). Serine 29 carries the phosphoserine modification. A run of 10 helical transmembrane segments spans residues 43 to 63 (ISVS…MLLL), 88 to 108 (WTQA…FFIF), 127 to 147 (LFFL…LFAL), 155 to 175 (GIFS…TAII), 183 to 203 (WIII…PDFG), 219 to 239 (WLAF…QLGF), 258 to 278 (VLEM…VGLF), 301 to 321 (VLSL…MIGL), 332 to 352 (VVHM…FDFM), and 355 to 375 (VFSW…GSYF).

It belongs to the purine permeases (TC 2.A.7.14) family.

The protein resides in the membrane. This is Probable purine permease 17 (PUP17) from Arabidopsis thaliana (Mouse-ear cress).